Consider the following 194-residue polypeptide: Leucyl/phenylalanyl-tRNA--protein transferase (194 aa).

This sequence belongs to the L/F-transferase family.

The protein localises to the cytoplasm. The enzyme catalyses N-terminal L-lysyl-[protein] + L-leucyl-tRNA(Leu) = N-terminal L-leucyl-L-lysyl-[protein] + tRNA(Leu) + H(+). It carries out the reaction N-terminal L-arginyl-[protein] + L-leucyl-tRNA(Leu) = N-terminal L-leucyl-L-arginyl-[protein] + tRNA(Leu) + H(+). The catalysed reaction is L-phenylalanyl-tRNA(Phe) + an N-terminal L-alpha-aminoacyl-[protein] = an N-terminal L-phenylalanyl-L-alpha-aminoacyl-[protein] + tRNA(Phe). Its function is as follows. Functions in the N-end rule pathway of protein degradation where it conjugates Leu, Phe and, less efficiently, Met from aminoacyl-tRNAs to the N-termini of proteins containing an N-terminal arginine or lysine. The chain is Leucyl/phenylalanyl-tRNA--protein transferase from Chlorobaculum tepidum (strain ATCC 49652 / DSM 12025 / NBRC 103806 / TLS) (Chlorobium tepidum).